Reading from the N-terminus, the 136-residue chain is Large ribosomal subunit protein uL16 (136 aa).

It belongs to the universal ribosomal protein uL16 family. In terms of assembly, part of the 50S ribosomal subunit.

Binds 23S rRNA and is also seen to make contacts with the A and possibly P site tRNAs. The chain is Large ribosomal subunit protein uL16 from Ehrlichia chaffeensis (strain ATCC CRL-10679 / Arkansas).